The primary structure comprises 185 residues: Large ribosomal subunit protein uL5 (185 aa).

Belongs to the universal ribosomal protein uL5 family. As to quaternary structure, part of the 50S ribosomal subunit; part of the 5S rRNA/L5/L18/L25 subcomplex. Contacts the 5S rRNA and the P site tRNA. Forms a bridge to the 30S subunit in the 70S ribosome.

Its function is as follows. This is one of the proteins that bind and probably mediate the attachment of the 5S RNA into the large ribosomal subunit, where it forms part of the central protuberance. In the 70S ribosome it contacts protein S13 of the 30S subunit (bridge B1b), connecting the 2 subunits; this bridge is implicated in subunit movement. Contacts the P site tRNA; the 5S rRNA and some of its associated proteins might help stabilize positioning of ribosome-bound tRNAs. The chain is Large ribosomal subunit protein uL5 from Brucella abortus (strain S19).